A 345-amino-acid polypeptide reads, in one-letter code: UDP-N-acetylenolpyruvoylglucosamine reductase (345 aa).

The 171-residue stretch at 16 to 186 (LSVSASCIKV…TAVGIFLKKE (171 aa)) folds into the FAD-binding PCMH-type domain. Arg-162 is an active-site residue. The Proton donor role is filled by Ser-232. Glu-328 is an active-site residue.

The protein belongs to the MurB family. The cofactor is FAD.

Its subcellular location is the cytoplasm. It catalyses the reaction UDP-N-acetyl-alpha-D-muramate + NADP(+) = UDP-N-acetyl-3-O-(1-carboxyvinyl)-alpha-D-glucosamine + NADPH + H(+). The protein operates within cell wall biogenesis; peptidoglycan biosynthesis. Cell wall formation. The chain is UDP-N-acetylenolpyruvoylglucosamine reductase from Pectobacterium atrosepticum (strain SCRI 1043 / ATCC BAA-672) (Erwinia carotovora subsp. atroseptica).